The chain runs to 194 residues: uncharacterized protein (194 aa).

Disordered stretches follow at residues 1-72 (MAAK…PAAE) and 113-194 (VLIP…SLAV). The segment covering 26–39 (AEGRSSEGRKERTA) has biased composition (basic and acidic residues). The segment covering 146–171 (GSSSTSRNQVASLAYRTQNTAASQPR) has biased composition (polar residues).

This is an uncharacterized protein from Homo sapiens (Human).